We begin with the raw amino-acid sequence, 155 residues long: 3-hydroxyacyl-[acyl-carrier-protein] dehydratase FabZ (155 aa).

Residue H57 is part of the active site.

The protein belongs to the thioester dehydratase family. FabZ subfamily.

It is found in the cytoplasm. It carries out the reaction a (3R)-hydroxyacyl-[ACP] = a (2E)-enoyl-[ACP] + H2O. Functionally, involved in unsaturated fatty acids biosynthesis. Catalyzes the dehydration of short chain beta-hydroxyacyl-ACPs and long chain saturated and unsaturated beta-hydroxyacyl-ACPs. The sequence is that of 3-hydroxyacyl-[acyl-carrier-protein] dehydratase FabZ from Sorangium cellulosum (strain So ce56) (Polyangium cellulosum (strain So ce56)).